Consider the following 347-residue polypeptide: NADH-ubiquinone oxidoreductase chain 2 (347 aa).

The next 11 membrane-spanning stretches (helical) occupy residues 3-23, 25-45, 59-79, 96-116, 122-142, 145-165, 178-198, 202-222, 240-260, 276-296, and 326-346; these read PLIF…VMIS, HWLM…PVLM, YFLT…INLL, IIMT…FWVP, VSLT…LSVL, IAPV…IMIG, ILAY…IFNP, LLNL…FMTV, ITTS…LTGF, IILA…YMRL, and LSPL…MMIL.

The protein belongs to the complex I subunit 2 family. As to quaternary structure, core subunit of respiratory chain NADH dehydrogenase (Complex I) which is composed of 45 different subunits. Interacts with TMEM242.

The protein localises to the mitochondrion inner membrane. The enzyme catalyses a ubiquinone + NADH + 5 H(+)(in) = a ubiquinol + NAD(+) + 4 H(+)(out). Functionally, core subunit of the mitochondrial membrane respiratory chain NADH dehydrogenase (Complex I) which catalyzes electron transfer from NADH through the respiratory chain, using ubiquinone as an electron acceptor. Essential for the catalytic activity and assembly of complex I. The chain is NADH-ubiquinone oxidoreductase chain 2 from Peropteryx macrotis (Lesser dog-like bat).